The sequence spans 172 residues: uncharacterized protein (172 aa).

This sequence belongs to the flavoredoxin family. The cofactor is FMN.

This is an uncharacterized protein from Pyrococcus abyssi (strain GE5 / Orsay).